Consider the following 180-residue polypeptide: dCTP deaminase (180 aa).

DCTP contacts are provided by residues 101 to 106 (KSSFAR) and aspartate 117. Residue glutamate 127 is the Proton donor/acceptor of the active site. Tyrosine 159 and glutamine 168 together coordinate dCTP.

The protein belongs to the dCTP deaminase family. As to quaternary structure, homotrimer.

The catalysed reaction is dCTP + H2O + H(+) = dUTP + NH4(+). Its pathway is pyrimidine metabolism; dUMP biosynthesis; dUMP from dCTP (dUTP route): step 1/2. In terms of biological role, catalyzes the deamination of dCTP to dUTP. The polypeptide is dCTP deaminase (Ignicoccus hospitalis (strain KIN4/I / DSM 18386 / JCM 14125)).